A 277-amino-acid chain; its full sequence is F420-dependent methylenetetrahydromethanopterin dehydrogenase (277 aa).

A disordered region spans residues 249–277 (EKATDSVSRKPHGADGKRLNKTKLMEKPE).

This sequence belongs to the MTD family.

It catalyses the reaction 5,10-methylenetetrahydromethanopterin + oxidized coenzyme F420-(gamma-L-Glu)(n) + 2 H(+) = 5,10-methenyl-5,6,7,8-tetrahydromethanopterin + reduced coenzyme F420-(gamma-L-Glu)(n). It functions in the pathway one-carbon metabolism; methanogenesis from CO(2); 5,10-methylene-5,6,7,8-tetrahydromethanopterin from 5,10-methenyl-5,6,7,8-tetrahydromethanopterin (coenzyme F420 route): step 1/1. Catalyzes the reversible reduction of methenyl-H(4)MPT(+) to methylene-H(4)MPT. This chain is F420-dependent methylenetetrahydromethanopterin dehydrogenase, found in Methanococcus aeolicus (strain ATCC BAA-1280 / DSM 17508 / OCM 812 / Nankai-3).